A 969-amino-acid polypeptide reads, in one-letter code: Squamosa promoter-binding-like protein 6 (969 aa).

Disordered stretches follow at residues 1–25 (MEAARVGAQSRHLYGGGLGEPDMDR) and 54–81 (EASGLALNSSPSSSEEAGAASVRNVNAR). Low complexity predominate over residues 55-74 (ASGLALNSSPSSSEEAGAAS). The SBP-type zinc finger occupies 149–226 (GPACQVEGCT…AGHNRRRRKT (78 aa)). Zn(2+) contacts are provided by Cys152, Cys157, Cys174, His177, Cys193, Cys196, His200, and Cys212. The Bipartite nuclear localization signal signature appears at 209–225 (KRSCRRRLAGHNRRRRK). Positions 377–434 (GMEGFEDGYEGSPTPAFKTTDSPNCPSWMHQDSTQSPPQTSGNSDSTSAQSLSSSNGD) are disordered. Residues 393–419 (FKTTDSPNCPSWMHQDSTQSPPQTSGN) show a composition bias toward polar residues. Residues 420–431 (SDSTSAQSLSSS) show a composition bias toward low complexity.

In terms of tissue distribution, ubiquitous.

Its subcellular location is the nucleus. Trans-acting factor that binds specifically to the consensus nucleotide sequence 5'-TNCGTACAA-3'. The protein is Squamosa promoter-binding-like protein 6 (SPL6) of Oryza sativa subsp. japonica (Rice).